The following is a 441-amino-acid chain: Zinc finger and BTB domain-containing protein 8A (441 aa).

The BTB domain occupies 24–92; the sequence is CDCSILVEGK…VYSGKLSLTG (69 aa). Polar residues-rich tracts occupy residues 143–170 and 178–196; these read NGVE…SPEQ and KSWN…TQQP. Residues 143–251 are disordered; sequence NGVERSSFYS…QSEEQAQIDA (109 aa). Phosphoserine is present on residues S161 and S167. Glycyl lysine isopeptide (Lys-Gly) (interchain with G-Cter in SUMO2) cross-links involve residues K178, K182, K191, and K199. A compositionally biased stretch (basic and acidic residues) spans 198–208; the sequence is AKHEPRKESIK. A compositionally biased stretch (low complexity) spans 234-243; it reads SDSSSHVSQS. 2 C2H2-type zinc fingers span residues 282 to 304 and 310 to 333; these read FKCP…LRCH and YPCQ…RTIH. K437 is covalently cross-linked (Glycyl lysine isopeptide (Lys-Gly) (interchain with G-Cter in SUMO2)).

It is found in the nucleus. May be involved in transcriptional regulation. The sequence is that of Zinc finger and BTB domain-containing protein 8A (ZBTB8A) from Homo sapiens (Human).